The sequence spans 148 residues: Isotocin-neurophysin IT 2 (148 aa).

The N-terminal stretch at 1–20 is a signal peptide; the sequence is MSGSMSSVFSLLYLLSVCSA. Cys21 and Cys26 form a disulfide bridge. At Gly29 the chain carries Glycine amide. Intrachain disulfides connect Cys42/Cys86, Cys45/Cys59, Cys53/Cys76, Cys60/Cys66, Cys93/Cys105, Cys99/Cys117, and Cys106/Cys111.

It belongs to the vasopressin/oxytocin family.

Its function is as follows. Isotocin causes contraction of smooth muscles. The sequence is that of Isotocin-neurophysin IT 2 from Catostomus commersonii (White sucker).